Reading from the N-terminus, the 360-residue chain is Luc7-like protein (360 aa).

Positions 143-206 form a coiled coil; the sequence is KEQNSKITEL…QEKNENKRMS (64 aa). The interval 255 to 360 is disordered; sequence LGRTDFYNAP…DDRRKRDRNY (106 aa). Residues 269–293 are compositionally biased toward basic and acidic residues; it reads DSYRDDRRSSSSSYHDIDGRRDHRY. Low complexity predominate over residues 312-321; sequence NNGRGSSRDN. Basic and acidic residues predominate over residues 329-360; that stretch reads RDYRNDHGKDYDRKRERDYYNDDDRRKRDRNY.

Belongs to the Luc7 family.

The protein localises to the nucleus. Functionally, may play a role in RNA splicing. This is Luc7-like protein (crop) from Dictyostelium discoideum (Social amoeba).